We begin with the raw amino-acid sequence, 1371 residues long: Perilipin-4 (1371 aa).

Over residues 1 to 13 (MSAPDEGRRDPPK) the composition is skewed to basic and acidic residues. Residues 1 to 22 (MSAPDEGRRDPPKPKGKTLGSF) form a disordered region. Phosphoserine occurs at positions 25 and 31. Residues 37-86 (ANAHSSARARPAADPTGAPAAEAAQPQAQVAAHPEQTAPWTEKELQPSEK) are disordered. A compositionally biased stretch (low complexity) spans 44-72 (RARPAADPTGAPAAEAAQPQAQVAAHPEQ). 27 repeat units span residues 109-141 (GVAS…VVSS), 142-174 (GVTG…TVST), 175-207 (GLTG…TVTT), 208-240 (GVMG…AVST), 241-273 (GLTG…TVCS), 274-306 (GVTG…TVCS), 307-339 (GVTG…TVCS), 340-372 (GVTG…TVCS), 373-405 (GVTG…TMST), 406-438 (GLTG…TVCS), 439-471 (GVTG…TVCS), 472-504 (GVTG…AVST), 505-537 (GLTG…TVCS), 538-570 (GVTS…TMST), 571-603 (GLTG…TVTT), 604-636 (GLVG…TIYS), 637-669 (GVTS…TFGS), 670-702 (GVTS…TVTT), 703-735 (GLMG…TVCS), 736-768 (GVTG…AVST), 769-801 (GLTG…AVCS), 802-834 (GVTG…TVCS), 835-867 (GVTG…TLGS), 868-900 (GVTG…AVST), 901-933 (GLTG…TVCS), 934-966 (GVTG…AVTT), and 967-999 (GVTG…TVFS). The tract at residues 109 to 999 (GVASVVDVAK…LMGTKDTVFS (891 aa)) is 27 X 33 AA approximate tandem repeat. Residues 1060 to 1083 (PATSWGGLTSSRTTDNGGEQTALS) are compositionally biased toward polar residues. 2 disordered regions span residues 1060-1093 (PATS…SGIS) and 1240-1260 (QAPE…EDAA).

The protein belongs to the perilipin family.

The protein resides in the cell membrane. Its subcellular location is the cytoplasm. It is found in the lipid droplet. May play a role in triacylglycerol packaging into adipocytes. May function as a coat protein involved in the biogenesis of lipid droplets. In Homo sapiens (Human), this protein is Perilipin-4.